The primary structure comprises 309 residues: Methionyl-tRNA formyltransferase (309 aa).

Residue 110–113 coordinates (6S)-5,6,7,8-tetrahydrofolate; sequence SLLP.

This sequence belongs to the Fmt family.

The enzyme catalyses L-methionyl-tRNA(fMet) + (6R)-10-formyltetrahydrofolate = N-formyl-L-methionyl-tRNA(fMet) + (6S)-5,6,7,8-tetrahydrofolate + H(+). In terms of biological role, attaches a formyl group to the free amino group of methionyl-tRNA(fMet). The formyl group appears to play a dual role in the initiator identity of N-formylmethionyl-tRNA by promoting its recognition by IF2 and preventing the misappropriation of this tRNA by the elongation apparatus. The chain is Methionyl-tRNA formyltransferase from Caldanaerobacter subterraneus subsp. tengcongensis (strain DSM 15242 / JCM 11007 / NBRC 100824 / MB4) (Thermoanaerobacter tengcongensis).